A 179-amino-acid chain; its full sequence is Pyridoxal 5'-phosphate synthase subunit PdxT (179 aa).

48 to 50 contributes to the L-glutamine binding site; it reads GES. The active-site Nucleophile is the C79. Residues R101 and 127–128 each bind L-glutamine; that span reads IR. Residues H163 and E165 each act as charge relay system in the active site.

Belongs to the glutaminase PdxT/SNO family. In the presence of PdxS, forms a dodecamer of heterodimers. Only shows activity in the heterodimer.

The enzyme catalyses aldehydo-D-ribose 5-phosphate + D-glyceraldehyde 3-phosphate + L-glutamine = pyridoxal 5'-phosphate + L-glutamate + phosphate + 3 H2O + H(+). It catalyses the reaction L-glutamine + H2O = L-glutamate + NH4(+). It functions in the pathway cofactor biosynthesis; pyridoxal 5'-phosphate biosynthesis. Its function is as follows. Catalyzes the hydrolysis of glutamine to glutamate and ammonia as part of the biosynthesis of pyridoxal 5'-phosphate. The resulting ammonia molecule is channeled to the active site of PdxS. The polypeptide is Pyridoxal 5'-phosphate synthase subunit PdxT (Francisella philomiragia subsp. philomiragia (strain ATCC 25017 / CCUG 19701 / FSC 153 / O#319-036)).